Consider the following 460-residue polypeptide: 2-methylcitrate synthase, mitochondrial (460 aa).

The transit peptide at methionine 1 to alanine 24 directs the protein to the mitochondrion. Residues arginine 69 and lysine 187 each coordinate CoA. Histidine 264 lines the oxaloacetate pocket. Leucine 299 is a CoA binding site. Histidine 300 is an active-site residue. Residues valine 341, glycine 343, and tyrosine 344 each coordinate CoA. Histidine 346 and arginine 355 together coordinate oxaloacetate. Histidine 346 is a catalytic residue. Threonine 395, lysine 396, and asparagine 401 together coordinate CoA. Aspartate 403 is a catalytic residue. Residues arginine 429 and arginine 449 each coordinate oxaloacetate.

It belongs to the citrate synthase family. As to quaternary structure, homodimer.

Its subcellular location is the mitochondrion matrix. It catalyses the reaction propanoyl-CoA + oxaloacetate + H2O = (2S,3S)-2-methylcitrate + CoA + H(+). The catalysed reaction is oxaloacetate + acetyl-CoA + H2O = citrate + CoA + H(+). It participates in organic acid metabolism; propanoate degradation. With respect to regulation, partially inhibited by ATP. Catalyzes the synthesis of (2S,3S)-2-methylcitrate from propionyl-CoA and oxaloacetate and also from acetyl-CoA and oxaloacetate with a greater efficiency. Also has citrate synthase activity and can substitute for the loss of citA activity. The sequence is that of 2-methylcitrate synthase, mitochondrial from Emericella nidulans (strain FGSC A4 / ATCC 38163 / CBS 112.46 / NRRL 194 / M139) (Aspergillus nidulans).